We begin with the raw amino-acid sequence, 761 residues long: Disintegrin and metalloproteinase domain-containing protein 24 (761 aa).

An N-terminal signal peptide occupies residues 1 to 34 (MVAMSEALVHARITLLQAWLRMLLFSSVWPPTWC). A propeptide spanning residues 35–200 (AEYKGPPETV…GKSTRMQSIY (166 aa)) is cleaved from the precursor. The Extracellular portion of the chain corresponds to 35 to 697 (AEYKGPPETV…SKKDAPEKPN (663 aa)). Residue asparagine 140 is glycosylated (N-linked (GlcNAc...) asparagine). Positions 172–179 (MRCGLTDE) match the Cysteine switch motif. Cysteine 174 lines the Zn(2+) pocket. The Peptidase M12B domain occupies 208–400 (LYIKLALVID…KSCIHREPRP (193 aa)). Asparagine 227 and asparagine 301 each carry an N-linked (GlcNAc...) asparagine glycan. Disulfide bonds link cysteine 323–cysteine 393, cysteine 357–cysteine 379, cysteine 359–cysteine 364, cysteine 465–cysteine 485, cysteine 635–cysteine 646, cysteine 640–cysteine 652, and cysteine 654–cysteine 663. Residue histidine 342 participates in Zn(2+) binding. The active site involves glutamate 343. Positions 346 and 352 each coordinate Zn(2+). Residues asparagine 378, asparagine 390, and asparagine 479 are each glycosylated (N-linked (GlcNAc...) asparagine). Residues 406–493 (LKVCGNGIVE…ECPEDLFVQD (88 aa)) form the Disintegrin domain. Positions 631–664 (WVNDCTPETCNMKGVCNNKQHCHCDVGWSPPNCQ) constitute an EGF-like domain. The helical transmembrane segment at 698–718 (VIIWLLPIICVAVVLSVLFCL) threads the bilayer. Topologically, residues 719 to 761 (SGATKKSREAAASQPAEERVKPPYEGAEPSYETVKPPDEWANP) are cytoplasmic. The tract at residues 725-761 (SREAAASQPAEERVKPPYEGAEPSYETVKPPDEWANP) is disordered.

As to quaternary structure, monomer. Requires Zn(2+) as cofactor. The prodomain is removed during sperm passage through the caput epididymis after the protein has reached the cell surface. Not processed in the secretory pathway. In terms of tissue distribution, expressed exclusively in testis and more specifically on the surface of mature sperm (at protein level).

Its subcellular location is the membrane. Its function is as follows. Plasma membrane protease present on mature sperm that may be involved in sperm function during epididymal maturation and/or fertilization. The protein is Disintegrin and metalloproteinase domain-containing protein 24 of Mus musculus (Mouse).